The sequence spans 448 residues: Phosphoglucosamine mutase (448 aa).

Residue S99 is the Phosphoserine intermediate of the active site. Residues S99, D238, D240, and D242 each contribute to the Mg(2+) site. Position 99 is a phosphoserine (S99).

This sequence belongs to the phosphohexose mutase family. Mg(2+) serves as cofactor. Post-translationally, activated by phosphorylation.

The enzyme catalyses alpha-D-glucosamine 1-phosphate = D-glucosamine 6-phosphate. Its function is as follows. Catalyzes the conversion of glucosamine-6-phosphate to glucosamine-1-phosphate. This chain is Phosphoglucosamine mutase, found in Marinomonas sp. (strain MWYL1).